A 561-amino-acid polypeptide reads, in one-letter code: Dihydroxy-acid dehydratase (561 aa).

Position 51 (cysteine 51) interacts with [2Fe-2S] cluster. Aspartate 83 contributes to the Mg(2+) binding site. Cysteine 124 is a [2Fe-2S] cluster binding site. Residues aspartate 125 and lysine 126 each contribute to the Mg(2+) site. N6-carboxylysine is present on lysine 126. [2Fe-2S] cluster is bound at residue cysteine 196. Glutamate 447 is a binding site for Mg(2+). Residue serine 473 is the Proton acceptor of the active site.

Belongs to the IlvD/Edd family. As to quaternary structure, homodimer. [2Fe-2S] cluster is required as a cofactor. Requires Mg(2+) as cofactor.

It catalyses the reaction (2R)-2,3-dihydroxy-3-methylbutanoate = 3-methyl-2-oxobutanoate + H2O. It carries out the reaction (2R,3R)-2,3-dihydroxy-3-methylpentanoate = (S)-3-methyl-2-oxopentanoate + H2O. The protein operates within amino-acid biosynthesis; L-isoleucine biosynthesis; L-isoleucine from 2-oxobutanoate: step 3/4. It participates in amino-acid biosynthesis; L-valine biosynthesis; L-valine from pyruvate: step 3/4. Functionally, functions in the biosynthesis of branched-chain amino acids. Catalyzes the dehydration of (2R,3R)-2,3-dihydroxy-3-methylpentanoate (2,3-dihydroxy-3-methylvalerate) into 2-oxo-3-methylpentanoate (2-oxo-3-methylvalerate) and of (2R)-2,3-dihydroxy-3-methylbutanoate (2,3-dihydroxyisovalerate) into 2-oxo-3-methylbutanoate (2-oxoisovalerate), the penultimate precursor to L-isoleucine and L-valine, respectively. This chain is Dihydroxy-acid dehydratase, found in Oceanobacillus iheyensis (strain DSM 14371 / CIP 107618 / JCM 11309 / KCTC 3954 / HTE831).